Reading from the N-terminus, the 182-residue chain is Bifunctional protein PyrR (182 aa).

Residues 99–111 (IVLVDDVLFTGRT) carry the PRPP-binding motif.

It belongs to the purine/pyrimidine phosphoribosyltransferase family. PyrR subfamily. In terms of assembly, homodimer and homohexamer; in equilibrium.

The catalysed reaction is UMP + diphosphate = 5-phospho-alpha-D-ribose 1-diphosphate + uracil. Its function is as follows. Regulates transcriptional attenuation of the pyrimidine nucleotide (pyr) operon by binding in a uridine-dependent manner to specific sites on pyr mRNA. This disrupts an antiterminator hairpin in the RNA and favors formation of a downstream transcription terminator, leading to a reduced expression of downstream genes. In terms of biological role, also displays a weak uracil phosphoribosyltransferase activity which is not physiologically significant. The protein is Bifunctional protein PyrR of Caldicellulosiruptor bescii (strain ATCC BAA-1888 / DSM 6725 / KCTC 15123 / Z-1320) (Anaerocellum thermophilum).